Reading from the N-terminus, the 719-residue chain is Developmental regulator flbA (719 aa).

The segment covering 1 to 17 (MPTSISTAPLSQGSPPS) has biased composition (polar residues). 3 disordered regions span residues 1 to 39 (MPTSISTAPLSQGSPPSSLIDYQPQSVPSSSSPPPSTAA), 117 to 141 (IGSTTNSSLRQSASSGSLQKHSRKA), and 155 to 190 (LSPPLSDGSGSSEQSSSAPFEPLSAVTEQPNPAAER). Composition is skewed to low complexity over residues 123–135 (SSLRQSASSGSLQ) and 158–171 (PLSDGSGSSEQSSS). The segment at 214–411 (QTSSRLLRMT…QDGPNVKSSV (198 aa)) is fungal-DR. The DEP domain maps to 425-511 (GLVGVKMARE…SKNAIYAITE (87 aa)). Positions 540-685 (SNNARLNHIL…FLRDPKYSAI (146 aa)) constitute an RGS domain. The segment at 694–719 (LIGGGRSYSPTPGNVPERSMSRSQRS) is disordered.

Required for asexual sporulation and normal colony development. May be involved in brlA activation. Could play a regulatory role in controlling the flug-initiated signal transduction pathway that triggers the asexual reproduction. The protein is Developmental regulator flbA (flbA) of Emericella nidulans (strain FGSC A4 / ATCC 38163 / CBS 112.46 / NRRL 194 / M139) (Aspergillus nidulans).